The chain runs to 209 residues: Thiamine-phosphate synthase (209 aa).

4-amino-2-methyl-5-(diphosphooxymethyl)pyrimidine is bound by residues 39–43 (QLREK) and asparagine 71. Residues aspartate 72 and aspartate 91 each contribute to the Mg(2+) site. Serine 110 provides a ligand contact to 4-amino-2-methyl-5-(diphosphooxymethyl)pyrimidine. A 2-[(2R,5Z)-2-carboxy-4-methylthiazol-5(2H)-ylidene]ethyl phosphate-binding site is contributed by 136–138 (TGT). Lysine 139 is a binding site for 4-amino-2-methyl-5-(diphosphooxymethyl)pyrimidine. Residues glycine 166 and 186–187 (VS) each bind 2-[(2R,5Z)-2-carboxy-4-methylthiazol-5(2H)-ylidene]ethyl phosphate.

This sequence belongs to the thiamine-phosphate synthase family. The cofactor is Mg(2+).

The enzyme catalyses 2-[(2R,5Z)-2-carboxy-4-methylthiazol-5(2H)-ylidene]ethyl phosphate + 4-amino-2-methyl-5-(diphosphooxymethyl)pyrimidine + 2 H(+) = thiamine phosphate + CO2 + diphosphate. It catalyses the reaction 2-(2-carboxy-4-methylthiazol-5-yl)ethyl phosphate + 4-amino-2-methyl-5-(diphosphooxymethyl)pyrimidine + 2 H(+) = thiamine phosphate + CO2 + diphosphate. It carries out the reaction 4-methyl-5-(2-phosphooxyethyl)-thiazole + 4-amino-2-methyl-5-(diphosphooxymethyl)pyrimidine + H(+) = thiamine phosphate + diphosphate. The protein operates within cofactor biosynthesis; thiamine diphosphate biosynthesis; thiamine phosphate from 4-amino-2-methyl-5-diphosphomethylpyrimidine and 4-methyl-5-(2-phosphoethyl)-thiazole: step 1/1. Condenses 4-methyl-5-(beta-hydroxyethyl)thiazole monophosphate (THZ-P) and 2-methyl-4-amino-5-hydroxymethyl pyrimidine pyrophosphate (HMP-PP) to form thiamine monophosphate (TMP). This Clostridium beijerinckii (strain ATCC 51743 / NCIMB 8052) (Clostridium acetobutylicum) protein is Thiamine-phosphate synthase.